Consider the following 272-residue polypeptide: Replication-associated protein A (272 aa).

The 104-residue stretch at 11–114 (SHRSPNTFLT…PLALFERGTF (104 aa)) folds into the CRESS-DNA virus Rep endonuclease domain. The short motif at 18-21 (FLTY) is the RCR-1 element. Glutamate 52 and histidine 62 together coordinate a divalent metal cation. An RCR-2 motif is present at residues 60 to 65 (CLHALI). The active-site For DNA cleavage activity is tyrosine 100. The RCR-3 signature appears at 100 to 103 (YITK). Glutamate 104 lines the a divalent metal cation pocket. Residues 175–187 (SANKLFPDIQEEF) are oligomerization. An LXCXE motif, interaction with host RBR1 motif is present at residues 198–202 (LLCNE). The interval 221–230 (LLLQPNCYSI) is transactivation. Polar residues predominate over residues 251-265 (QGSAASTSSVQQGQE). Residues 251–272 (QGSAASTSSVQQGQENLHGPEA) are disordered.

It belongs to the geminiviridae Rep protein family. Homooligomer. Interacts (via LXCXE domain) with host retinoblastoma-related protein 1 (RBR1), and may thereby deregulate the host cell cycle. Part of the C- and V-complexes which are RepA-Rep-DNA complexes involved in the c-sense and v-sense transcription.

The protein resides in the host nucleus. It localises to the host cytoplasm. Implicated in enhancement of V-sense gene expression. Acts a an inhibitor of C-sense gene transcription. The chain is Replication-associated protein A from Avena sativa (Oat).